A 1275-amino-acid polypeptide reads, in one-letter code: Inner capsid protein lambda-1 (1275 aa).

Residues M1–S12 show a composition bias toward basic residues. The segment at M1–P149 is disordered. 2 stretches are compositionally biased toward basic and acidic residues: residues D18–N35 and N75–K117. Polar residues predominate over residues A118–P149. A C2H2-type zinc finger spans residues Y181 to H203.

Belongs to the orthoreovirus lambda-1 protein family. In terms of assembly, homodecamer; each decamer is made up of two conformers of VP2, called VP2A and VP2B. 12 homodecamers assemble to form an icosahedral capsid. Interacts with protein mu-NS; in viral inclusions. Mg(2+) is required as a cofactor. The cofactor is Mn(2+).

Its subcellular location is the virion. It catalyses the reaction ATP + H2O = ADP + phosphate + H(+). In terms of biological role, inner capsid protein that self-assembles to form an icosahedral capsid with a T=2 symmetry, which consists of 120 copies of VP2, with channels at each of its five-fold vertices. This capsid constitutes the innermost concentric layer of the viral mature particle. Displays NTPase, RNA 5'-triphosphatase (RTPase) and RNA helicase activities. Helicase activity might be involved in unwinding or reannealing dsRNA during RNA synthesis. RTPase enzymatic activity represents the first step in RNA capping, which yields a 5'-diphosphorylated plus-strand RNA. The chain is Inner capsid protein lambda-1 (L3) from Reovirus type 3 (strain Dearing) (T3D).